We begin with the raw amino-acid sequence, 341 residues long: LRP2-binding protein (341 aa).

The stretch at Val-56–Ala-89 is one TPR repeat. 6 Sel1-like repeats span residues Leu-90–Cys-122, Tyr-130–Asn-165, Leu-170–Ser-203, Leu-204–Asn-239, Val-240–Asn-271, and Ala-291–Ala-326.

It localises to the cytoplasm. Its function is as follows. May act as an adapter that regulates LRP2 function. In Xenopus laevis (African clawed frog), this protein is LRP2-binding protein (lrp2bp).